Here is a 240-residue protein sequence, read N- to C-terminus: Probable septum site-determining protein MinC (240 aa).

This sequence belongs to the MinC family. In terms of assembly, interacts with MinD and FtsZ.

In terms of biological role, cell division inhibitor that blocks the formation of polar Z ring septums. Rapidly oscillates between the poles of the cell to destabilize FtsZ filaments that have formed before they mature into polar Z rings. Prevents FtsZ polymerization. The protein is Probable septum site-determining protein MinC of Acinetobacter baumannii (strain ACICU).